A 134-amino-acid chain; its full sequence is Acyl carrier protein, mitochondrial (134 aa).

The transit peptide at 1–46 directs the protein to the mitochondrion; the sequence is MFRTAALTAARVARPAVASAVRAGVARPAFVQAVPKVAAFQAVRFY. A Carrier domain is found at 55-131; the sequence is DEVFSRIAQV…KAVEYILSQP (77 aa). Serine 91 is modified (O-(pantetheine 4'-phosphoryl)serine).

The protein belongs to the acyl carrier protein (ACP) family. As to quaternary structure, complex I is composed of about 30 different subunits. 4'-phosphopantetheine is transferred from CoA to a specific serine of apo-ACP by acpS. This modification is essential for activity because fatty acids are bound in thioester linkage to the sulfhydryl of the prosthetic group.

Its subcellular location is the mitochondrion. The protein operates within lipid metabolism; fatty acid biosynthesis. Carrier of the growing fatty acid chain in fatty acid biosynthesis. May be involved in the synthesis of very-long-chain fatty acids. Accessory and non-catalytic subunit of the mitochondrial membrane respiratory chain NADH dehydrogenase (Complex I), which functions in the transfer of electrons from NADH to the respiratory chain. The polypeptide is Acyl carrier protein, mitochondrial (nuo-12) (Neurospora crassa (strain ATCC 24698 / 74-OR23-1A / CBS 708.71 / DSM 1257 / FGSC 987)).